The following is a 187-amino-acid chain: Adenine phosphoribosyltransferase (187 aa).

The protein belongs to the purine/pyrimidine phosphoribosyltransferase family. As to quaternary structure, homodimer.

The protein localises to the cytoplasm. The catalysed reaction is AMP + diphosphate = 5-phospho-alpha-D-ribose 1-diphosphate + adenine. It functions in the pathway purine metabolism; AMP biosynthesis via salvage pathway; AMP from adenine: step 1/1. Catalyzes a salvage reaction resulting in the formation of AMP, that is energically less costly than de novo synthesis. This Yersinia pseudotuberculosis serotype O:3 (strain YPIII) protein is Adenine phosphoribosyltransferase.